Here is a 311-residue protein sequence, read N- to C-terminus: Pyrimidine-specific ribonucleoside hydrolase RihA (311 aa).

Histidine 240 is an active-site residue.

The protein belongs to the IUNH family. RihA subfamily.

Its function is as follows. Hydrolyzes with equal efficiency cytidine or uridine to ribose and cytosine or uracil, respectively. In Escherichia coli O139:H28 (strain E24377A / ETEC), this protein is Pyrimidine-specific ribonucleoside hydrolase RihA.